A 170-amino-acid polypeptide reads, in one-letter code: Inducible metalloproteinase inhibitor protein (170 aa).

The N-terminal stretch at 1 to 19 (MKCLLYLCLWCYCVLVSSS) is a signal peptide. Residues Asn-48 and Asn-149 are each glycosylated (N-linked (GlcNAc...) asparagine).

Post-translationally, cleaved. In terms of processing, five disulfide bonds are present. When artificially cleaved by thermolysin between Asn-56 and Ile-57, the two obtained chains (called heavy and light chains) remain linked. The N-terminus is blocked.

In terms of biological role, inhibits thermolysin, bacillolysin and pseudolysin, B.polymyxa metalloprotease and human MMP1 and MMP3. No activity on trypsin or cysteine protease papain. The chain is Inducible metalloproteinase inhibitor protein (IMPI) from Galleria mellonella (Greater wax moth).